We begin with the raw amino-acid sequence, 647 residues long: Probable inactive receptor kinase RLK902 (647 aa).

The N-terminal stretch at 1-29 (MRLFFTPSMSNLSIFFSILLLSLPLPSIG) is a signal peptide. LRR repeat units lie at residues 69 to 93 (GGRV…IFGN), 94 to 118 (LTQL…LGSC), 119 to 142 (SDLR…LFSL), 144 to 165 (NLVR…GFKN), and 166 to 192 (LTRL…SLDQ). Residues 268 to 288 (GIVIGCVVGLSLIVMILMVLF) form a helical membrane-spanning segment. Residues 365–639 (RASAEVLGKG…EVVRRIQELR (275 aa)) form the Protein kinase domain. Serine 367 carries the post-translational modification Phosphoserine. 371 to 379 (LGKGTFGTA) contacts ATP. A Phosphothreonine modification is found at threonine 388. Lysine 393 lines the ATP pocket. Serine 444 is subject to Phosphoserine. Phosphothreonine is present on threonine 520. Phosphoserine is present on serine 540. Residue threonine 618 is modified to Phosphothreonine.

This sequence belongs to the protein kinase superfamily. Ser/Thr protein kinase family. As to quaternary structure, interacts with At3g17950, At3g27210 and At5g05190. In terms of processing, autophosphorylation. Expressed in root tips, lateral root primordia, stipules, and floral organ abscission zones.

It is found in the cell membrane. This chain is Probable inactive receptor kinase RLK902 (RLK902), found in Arabidopsis thaliana (Mouse-ear cress).